Reading from the N-terminus, the 328-residue chain is tRNA uridine(34) hydroxylase (328 aa).

The 95-residue stretch at 130-224 (LDKDTVVLDT…YGKDPEVQGE (95 aa)) folds into the Rhodanese domain. The active-site Cysteine persulfide intermediate is the Cys184.

Belongs to the TrhO family.

It catalyses the reaction uridine(34) in tRNA + AH2 + O2 = 5-hydroxyuridine(34) in tRNA + A + H2O. In terms of biological role, catalyzes oxygen-dependent 5-hydroxyuridine (ho5U) modification at position 34 in tRNAs. In Streptococcus pneumoniae (strain Taiwan19F-14), this protein is tRNA uridine(34) hydroxylase.